We begin with the raw amino-acid sequence, 291 residues long: Ubiquinone biosynthesis protein COQ4, mitochondrial (291 aa).

A mitochondrion-targeting transit peptide spans 1-37; the sequence is MLGRRSVSLLRGLTELPVSSRAHTALRALSVPQTRRN. Residues His-169, Asp-170, His-173, and Glu-185 each contribute to the Zn(2+) site. The segment covering 271 to 283 has biased composition (basic and acidic residues); sequence PLNEAKEAAERRS. The disordered stretch occupies residues 271 to 291; that stretch reads PLNEAKEAAERRSKTTQNQIY.

This sequence belongs to the COQ4 family. Component of a multi-subunit COQ enzyme complex, composed of at least COQ3, COQ4, COQ5, COQ6, COQ7 and COQ9. The cofactor is Zn(2+).

It is found in the mitochondrion inner membrane. The enzyme catalyses a 4-hydroxy-3-methoxy-5-(all-trans-polyprenyl)benzoate + H(+) = a 2-methoxy-6-(all-trans-polyprenyl)phenol + CO2. The protein operates within cofactor biosynthesis; ubiquinone biosynthesis. Functionally, lyase that catalyzes the C1-decarboxylation of 4-hydroxy-3-methoxy-5-(all-trans-polyprenyl)benzoic acid into 2-methoxy-6-(all-trans-polyprenyl)phenol during ubiquinone biosynthesis. The sequence is that of Ubiquinone biosynthesis protein COQ4, mitochondrial from Coprinopsis cinerea (strain Okayama-7 / 130 / ATCC MYA-4618 / FGSC 9003) (Inky cap fungus).